The primary structure comprises 130 residues: Small ribosomal subunit protein uS8 (130 aa).

Belongs to the universal ribosomal protein uS8 family. As to quaternary structure, part of the 30S ribosomal subunit. Contacts proteins S5 and S12.

Functionally, one of the primary rRNA binding proteins, it binds directly to 16S rRNA central domain where it helps coordinate assembly of the platform of the 30S subunit. The chain is Small ribosomal subunit protein uS8 from Wigglesworthia glossinidia brevipalpis.